The sequence spans 106 residues: Prothymosin alpha-B (106 aa).

Residues 1 to 39 (MADAKVDSATEISAKDLKEKKLIEEKENGKDATNGKENE) are compositionally biased toward basic and acidic residues. Positions 1–106 (MADAKVDSAT…DVDPKKQKVN (106 aa)) are disordered. Phosphoserine is present on Ser8. At Thr10 the chain carries Phosphothreonine. Composition is skewed to acidic residues over residues 40 to 76 (ENGE…DEDL) and 85 to 98 (DDDE…EDDV).

Belongs to the pro/parathymosin family. Uniformly expressed in all embryonic cells at 4 and 8 hpf. At the 20-somite stage (18 hpf), ubiquitously expressed in the developing nervous system, in the tail bud and in the pronephric ducts. Also expressed in some placodes, including the anterior lateral line placode, otic vesicle and olfactory placode. At 27 hpf, strong expression persists in the central nervous system and the olfactory placode. Expressed strongly in the eyes and the pectoral fin buds. In the tail region, expressed in the spinal cord, in the posterior lateral line precursors, and persists in the pronephric ducts. At 48 hpf, expressed in all head territories including the developing brain, eyes, and pharyngeal arches. More caudally, expression persists in the pectoral fin buds, the spinal cord and, for the first time, appears in the intestine. At 72 hpf, expressed only in restricted regions of the brain, in pharyngeal arches region and in the amacrine cells and the horizontal cells of the retina.

The protein resides in the nucleus. The chain is Prothymosin alpha-B from Danio rerio (Zebrafish).